The following is a 567-amino-acid chain: uncharacterized protein (567 aa).

12 consecutive transmembrane segments (helical) span residues 136–156 (LFCL…LIFA), 159–179 (FMGI…SDII), 193–213 (LLLG…SEVF), 217–237 (LCFL…FFFV), 258–278 (ILGG…LTFG), 291–311 (LLLL…SITE), 334–354 (FLIG…FQLV), 364–384 (LRLA…GILM), 393–415 (LLFS…HPGI), 426–446 (PANV…IFAF), 457–477 (TLYL…SAVI), and 536–553 (AQQF…LCIL).

Belongs to the major facilitator superfamily.

Its subcellular location is the membrane. This is an uncharacterized protein from Schizosaccharomyces pombe (strain 972 / ATCC 24843) (Fission yeast).